We begin with the raw amino-acid sequence, 534 residues long: Hypothemycin biosynthesis cluster protein hpm4 (534 aa).

Disordered regions lie at residues 34 to 61, 110 to 130, and 236 to 287; these read IEPA…SDGP, LQSP…PLRL, and DGTG…KKCI. 2 stretches are compositionally biased toward low complexity: residues 112 to 127 and 258 to 275; these read SPTT…SCAP and TVSS…ACQT.

It functions in the pathway secondary metabolite biosynthesis. Functionally, part of the gene cluster that mediates the biosynthesis of hypothemycin, a resorcylic acid lactone (RAL) that irreversibly inhibits a subset of protein kinases with a conserved cysteine in the ATP binding site such as human ERK2. The first step is performed by both PKSs hmp3 and hmp8 and leads to the production of 7',8'-dehydrozearalenol (DHZ). The highly reducing PKS hpm8 synthesizes the reduced hexaketide (7S,11S,2E,8E)-7,11-dihydroxy-dodeca-2,8-dienoate, which is transferred downstream to the non-reducing PKS hpm3. Hpm3 then extends the reduced hexaketide to a nonaketide, after which regioselective cyclization and macrolactonization affords DHZ. The next step is the conversion of DHZ into aigialomycin C and is performed by the O-methyltransferase hmp5, the FAD-binding monooxygenase hmp7, and the cytochrome P450 monooxygenase hmp1. The wide substrate tolerance of the hmp5 and hmp7 implies that the reactions from DHZ to aigialomycin C can occur in any order. The steps from aigialomycin C to hypothemycin are less well established. The FAD-linked oxidoreductase hmp9 presumably catalyzes oxidation of the C-6' hydroxyl to a ketone. The timing of this oxidation is important, since the resulting enone functional group is a Michael acceptor that can react spontaneously with glutathione, an abundant metabolite in fungal cells. The glutathione S-transferase hmp2 catalyzes cis-trans isomerization of the 7',8' double bond with equilibrium favoring the trans isomer. The hpm6-encoded transporter might preferentially pump hypothemycin out of the cell relative to the trans isomer aigialomycin A. The cis-to-trans isomerization may be coupled with C-4' hydroxylation, since all known hypothemycin analogs containing the enone functional group also have hydroxyl groups at both C-4' and C-5'. In Hypomyces subiculosus (Nectria subiculosa), this protein is Hypothemycin biosynthesis cluster protein hpm4.